The following is a 530-amino-acid chain: MPKLIIVTGGVMSGVGKGVVVASIGRILRARGLSVNAVKIDPYINVDAGTMNPYAHGEVFVTYDGGETDLDLGHYERFLDVELSKRNNITSGQIYLTVIEKERRGEYLGQTVQLIPHVTDEIKRRIVEASGGYDVTLVEIGGTVGDYEQLPFLEAARQLGLELGEDVVFIHVAWVPLLKITGEFKTKPLQHSVAELRRYGIQPDAVVVRSEKPIDANSIKKIALFAHVPQWAIFNSYDVDTIYRVPLILEQQGLGDFLTRRLRLPSRSPEYRDWEEFLSKLSAPKYRISVGMCGKYVELPDAYLSIVEALKHAGAALDARPELVWINSVEVEKNPDILRKLDLDAIVVLPGFGKRGTEGMIECIRHARMEKIPFLGICFGMQLAVVEFARNVLGLKGANSTELDPETPHPVVHLAPEQREVDVLGGSMILGNREVEIVPGTLAASLYGVSVITERHRHRYEVNLSYLPKFTEAGLVVSGWRRDIKRVEIIELPGHPYFIATQFHPEFKSRPAKPRPVFLGLLKAALFAKR.

Residues 1–264 are amidoligase domain; sequence MPKLIIVTGG…GDFLTRRLRL (264 aa). Residue Ser13 participates in CTP binding. Position 13 (Ser13) interacts with UTP. 14-19 provides a ligand contact to ATP; that stretch reads GVGKGV. Residue Tyr54 coordinates L-glutamine. Asp71 lines the ATP pocket. Residues Asp71 and Glu139 each contribute to the Mg(2+) site. CTP contacts are provided by residues 146–148, 185–190, and Lys221; these read DYE and KTKPLQ. Residues 185–190 and Lys221 contribute to the UTP site; that span reads KTKPLQ. A Glutamine amidotransferase type-1 domain is found at 289-530; sequence SVGMCGKYVE…LLKAALFAKR (242 aa). Residue Gly351 participates in L-glutamine binding. The active-site Nucleophile; for glutamine hydrolysis is Cys378. L-glutamine contacts are provided by residues 379–382, Glu402, and Arg459; that span reads FGMQ. Catalysis depends on residues His504 and Glu506.

This sequence belongs to the CTP synthase family. In terms of assembly, homotetramer.

The enzyme catalyses UTP + L-glutamine + ATP + H2O = CTP + L-glutamate + ADP + phosphate + 2 H(+). It catalyses the reaction L-glutamine + H2O = L-glutamate + NH4(+). It carries out the reaction UTP + NH4(+) + ATP = CTP + ADP + phosphate + 2 H(+). It participates in pyrimidine metabolism; CTP biosynthesis via de novo pathway; CTP from UDP: step 2/2. Its activity is regulated as follows. Allosterically activated by GTP, when glutamine is the substrate; GTP has no effect on the reaction when ammonia is the substrate. The allosteric effector GTP functions by stabilizing the protein conformation that binds the tetrahedral intermediate(s) formed during glutamine hydrolysis. Inhibited by the product CTP, via allosteric rather than competitive inhibition. In terms of biological role, catalyzes the ATP-dependent amination of UTP to CTP with either L-glutamine or ammonia as the source of nitrogen. Regulates intracellular CTP levels through interactions with the four ribonucleotide triphosphates. This chain is CTP synthase, found in Pyrobaculum aerophilum (strain ATCC 51768 / DSM 7523 / JCM 9630 / CIP 104966 / NBRC 100827 / IM2).